Here is a 156-residue protein sequence, read N- to C-terminus: Lipoprotein signal peptidase (156 aa).

Helical transmembrane passes span phenylalanine 5–tryptophan 25, isoleucine 63–alanine 83, and serine 90–isoleucine 110. Catalysis depends on residues aspartate 120 and aspartate 138. Residues alanine 133 to tyrosine 153 form a helical membrane-spanning segment.

It belongs to the peptidase A8 family.

It is found in the cell inner membrane. The enzyme catalyses Release of signal peptides from bacterial membrane prolipoproteins. Hydrolyzes -Xaa-Yaa-Zaa-|-(S,diacylglyceryl)Cys-, in which Xaa is hydrophobic (preferably Leu), and Yaa (Ala or Ser) and Zaa (Gly or Ala) have small, neutral side chains.. Its pathway is protein modification; lipoprotein biosynthesis (signal peptide cleavage). In terms of biological role, this protein specifically catalyzes the removal of signal peptides from prolipoproteins. This chain is Lipoprotein signal peptidase, found in Oleidesulfovibrio alaskensis (strain ATCC BAA-1058 / DSM 17464 / G20) (Desulfovibrio alaskensis).